The primary structure comprises 279 residues: Thymidylate synthase (279 aa).

Position 133–134 (133–134) interacts with dUMP; that stretch reads RR. Cys-154 (nucleophile) is an active-site residue. Residues 178-181, Asn-189, and 219-221 contribute to the dUMP site; these read RSND and HIY. (6R)-5,10-methylene-5,6,7,8-tetrahydrofolate is bound at residue Asp-181. Ala-278 serves as a coordination point for (6R)-5,10-methylene-5,6,7,8-tetrahydrofolate.

Belongs to the thymidylate synthase family. Bacterial-type ThyA subfamily. In terms of assembly, homodimer.

The protein resides in the cytoplasm. It catalyses the reaction dUMP + (6R)-5,10-methylene-5,6,7,8-tetrahydrofolate = 7,8-dihydrofolate + dTMP. The protein operates within pyrimidine metabolism; dTTP biosynthesis. Its function is as follows. Catalyzes the reductive methylation of 2'-deoxyuridine-5'-monophosphate (dUMP) to 2'-deoxythymidine-5'-monophosphate (dTMP) while utilizing 5,10-methylenetetrahydrofolate (mTHF) as the methyl donor and reductant in the reaction, yielding dihydrofolate (DHF) as a by-product. This enzymatic reaction provides an intracellular de novo source of dTMP, an essential precursor for DNA biosynthesis. This is Thymidylate synthase from Streptococcus pyogenes serotype M3 (strain SSI-1).